The primary structure comprises 188 residues: Adenine phosphoribosyltransferase (188 aa).

Belongs to the purine/pyrimidine phosphoribosyltransferase family. As to quaternary structure, homodimer.

It localises to the cytoplasm. The enzyme catalyses AMP + diphosphate = 5-phospho-alpha-D-ribose 1-diphosphate + adenine. It participates in purine metabolism; AMP biosynthesis via salvage pathway; AMP from adenine: step 1/1. Functionally, catalyzes a salvage reaction resulting in the formation of AMP, that is energically less costly than de novo synthesis. The chain is Adenine phosphoribosyltransferase from Salinispora arenicola (strain CNS-205).